Consider the following 417-residue polypeptide: Gamma-glutamyl phosphate reductase (417 aa).

It belongs to the gamma-glutamyl phosphate reductase family.

It localises to the cytoplasm. The catalysed reaction is L-glutamate 5-semialdehyde + phosphate + NADP(+) = L-glutamyl 5-phosphate + NADPH + H(+). It functions in the pathway amino-acid biosynthesis; L-proline biosynthesis; L-glutamate 5-semialdehyde from L-glutamate: step 2/2. Functionally, catalyzes the NADPH-dependent reduction of L-glutamate 5-phosphate into L-glutamate 5-semialdehyde and phosphate. The product spontaneously undergoes cyclization to form 1-pyrroline-5-carboxylate. In Enterococcus faecalis (strain ATCC 700802 / V583), this protein is Gamma-glutamyl phosphate reductase.